Consider the following 236-residue polypeptide: Small ribosomal subunit protein uS2c (236 aa).

It belongs to the universal ribosomal protein uS2 family.

It localises to the plastid. The protein localises to the chloroplast. In Chaetosphaeridium globosum (Charophycean green alga), this protein is Small ribosomal subunit protein uS2c (rps2).